Here is a 170-residue protein sequence, read N- to C-terminus: Large ribosomal subunit protein uL16 (170 aa).

It belongs to the universal ribosomal protein uL16 family.

This Methanoculleus marisnigri (strain ATCC 35101 / DSM 1498 / JR1) protein is Large ribosomal subunit protein uL16.